Reading from the N-terminus, the 172-residue chain is Adenine phosphoribosyltransferase (172 aa).

The protein belongs to the purine/pyrimidine phosphoribosyltransferase family. As to quaternary structure, homodimer.

Its subcellular location is the cytoplasm. It carries out the reaction AMP + diphosphate = 5-phospho-alpha-D-ribose 1-diphosphate + adenine. It participates in purine metabolism; AMP biosynthesis via salvage pathway; AMP from adenine: step 1/1. Functionally, catalyzes a salvage reaction resulting in the formation of AMP, that is energically less costly than de novo synthesis. This Clostridium perfringens (strain ATCC 13124 / DSM 756 / JCM 1290 / NCIMB 6125 / NCTC 8237 / Type A) protein is Adenine phosphoribosyltransferase.